The primary structure comprises 490 residues: Cytochrome P450 2W1 (490 aa).

The signal sequence occupies residues 1 to 22 (MALLLLLFLGLLGLWGLLCACA). N-linked (GlcNAc...) asparagine glycosylation occurs at asparagine 177. Cysteine 433 is a binding site for heme.

The protein belongs to the cytochrome P450 family. The cofactor is heme. In terms of tissue distribution, very low levels are detected in fetal and adult tissues. Highly expressed in several tumor samples, in particular colon and adrenal tumors.

The protein localises to the endoplasmic reticulum lumen. The protein resides in the cell membrane. It localises to the microsome membrane. The enzyme catalyses all-trans-retinoate + reduced [NADPH--hemoprotein reductase] + O2 = all-trans-4-hydroxyretinoate + oxidized [NADPH--hemoprotein reductase] + H2O + H(+). It catalyses the reaction 1-(9Z-octadecenoyl)-sn-glycero-3-phosphocholine + reduced [NADPH--hemoprotein reductase] + O2 = 1-[8-hydroxy-(9Z)-octadecenoyl]-sn-glycero-3-phosphocholine + oxidized [NADPH--hemoprotein reductase] + H2O + H(+). The catalysed reaction is 1-(9Z-octadecenoyl)-sn-glycero-3-phosphocholine + reduced [NADPH--hemoprotein reductase] + O2 = 1-[11-hydroxy-(9Z)-octadecenoyl]-sn-glycero-3-phosphocholine + oxidized [NADPH--hemoprotein reductase] + H2O + H(+). It carries out the reaction 1-(9Z-octadecenoyl)-sn-glycero-3-phosphocholine + reduced [NADPH--hemoprotein reductase] + O2 = 1-[(9S,10R)-epoxy-octadecanoyl]-sn-glycero-3-phosphocholine + oxidized [NADPH--hemoprotein reductase] + H2O + H(+). The enzyme catalyses 1-(9Z-octadecenoyl)-sn-glycero-3-phosphocholine + reduced [NADPH--hemoprotein reductase] + O2 = 1-[(9R,10S)-epoxy-octadecanoyl]-sn-glycero-3-phosphocholine + oxidized [NADPH--hemoprotein reductase] + H2O + H(+). In terms of biological role, a cytochrome P450 monooxygenase that may play a role in retinoid and phospholipid metabolism. Catalyzes the hydroxylation of saturated carbon hydrogen bonds. Hydroxylates all trans-retinoic acid (atRA) to 4-hydroxyretinoate and may regulate atRA clearance. Other retinoids such as all-trans retinol and all-trans retinal are potential endogenous substrates. Catalyzes both epoxidation of double bonds and hydroxylation of carbon hydrogen bonds of the fatty acyl chain of 1-acylphospholipids/2-lysophospholipids. Can metabolize various lysophospholipids classes including lysophosphatidylcholines (LPCs), lysophosphatidylinositols (LPIs), lysophosphatidylserines (LPSs), lysophosphatidylglycerols (LPGs), lysophosphatidylethanolamines (LPEs) and lysophosphatidic acids (LPAs). Has low or no activity toward 2-acylphospholipids/1-lysophospholipids, diacylphospholipids and free fatty acids. May play a role in tumorigenesis by activating procarcinogens such as aflatoxin B1, polycyclic aromatic hydrocarbon dihydrodiols and aromatic amines. Mechanistically, uses molecular oxygen inserting one oxygen atom into a substrate, and reducing the second into a water molecule, with two electrons provided by NADPH via cytochrome P450 reductase (CPR; NADPH-ferrihemoprotein reductase). This is Cytochrome P450 2W1 from Homo sapiens (Human).